The following is a 324-amino-acid chain: Pseudouridylate synthase RPUSD4, mitochondrial (324 aa).

The transit peptide at 1–11 (MAAAGGGATRG) directs the protein to the mitochondrion. The active site involves Asp-105.

The protein belongs to the pseudouridine synthase RluA family.

It is found in the mitochondrion matrix. Its subcellular location is the nucleus. The protein resides in the cytoplasm. The enzyme catalyses uridine in 5S rRNA = pseudouridine in 5S rRNA. It catalyses the reaction a uridine in tRNA = a pseudouridine in tRNA. The catalysed reaction is a uridine in mRNA = a pseudouridine in mRNA. Its function is as follows. Catalyzes uridine to pseudouridine isomerization (pseudouridylation) of different mitochondrial RNA substrates. Acts on position 1397 in 16S mitochondrial ribosomal RNA (16S mt-rRNA). This modification is required for the assembly of 16S mt-rRNA into a functional mitochondrial ribosome. Acts on position 39 in mitochondrial tRNA(Phe). Also catalyzes pseudouridylation of mRNAs in nucleus: acts as a regulator of pre-mRNA splicing by mediating pseudouridylation of pre-mRNAs at locations associated with alternatively spliced regions. Pseudouridylation of pre-mRNAs near splice sites directly regulates mRNA splicing and mRNA 3'-end processing. This chain is Pseudouridylate synthase RPUSD4, mitochondrial, found in Xenopus tropicalis (Western clawed frog).